A 264-amino-acid polypeptide reads, in one-letter code: Small ribosomal subunit protein uS2 (264 aa).

The disordered stretch occupies residues Gly225–Glu264.

The protein belongs to the universal ribosomal protein uS2 family.

This is Small ribosomal subunit protein uS2 from Corynebacterium glutamicum (strain R).